A 179-amino-acid chain; its full sequence is Calcineurin subunit B type 2 (179 aa).

G2 carries the N-myristoyl glycine lipid modification. 4 consecutive EF-hand domains span residues 18–53, 57–85, 87–122, and 128–163; these read EEIRRLGKSFRKLDLDKSGSLSIEEFMRLPELQQNP, RVIDIFDTDGNGEVDFHEFIVGTSQFSVK, DEEQKLRFAFRIYDMDNDGFISNGELFQVLKMMVGN, and QLQQLVDKSILVLDKDGDGRISFEEFSDVVKTMEIH. Residues D31, D33, S35, S37, E42, D63, D65, N67, E69, E74, D100, D102, D104, and E111 each contribute to the Ca(2+) site. Residues 131 to 136 are calcineurin A binding; that stretch reads QLVDKS. D141, D143, D145, R147, and E152 together coordinate Ca(2+).

It belongs to the calcineurin regulatory subunit family. As to quaternary structure, forms a complex composed of a calmodulin-dependent catalytic subunit (also known as calcineurin A) and a regulatory Ca(2+)-binding subunit (also known as calcineurin B). There are three catalytic subunits, each encoded by a separate gene (PPP3CA, PPP3CB, and PPP3CC) and two regulatory subunits which are also encoded by separate genes (PPP3R1 and PPP3R2). Interacts with SPATA33 (via PQIIIT motif). In terms of tissue distribution, expressed in osteoblasts and bone marrow (at protein level). Expressed in the testis. Expressed in the sperm midpiece in a SPATA33-dependent manner (at protein level).

The protein localises to the mitochondrion. Functionally, regulatory subunit of calcineurin, a calcium-dependent, calmodulin stimulated protein phosphatase. Confers calcium sensitivity. The chain is Calcineurin subunit B type 2 (Ppp3r2) from Mus musculus (Mouse).